Consider the following 272-residue polypeptide: Cyanophycinase (272 aa).

Residues S132, E150, and H174 each act as charge relay system in the active site.

This sequence belongs to the peptidase S51 family.

The enzyme catalyses [L-4-(L-arginin-2-N-yl)aspartate](n) + H2O = [L-4-(L-arginin-2-N-yl)aspartate](n-1) + L-4-(L-arginin-2-N-yl)aspartate. Functionally, exopeptidase that catalyzes the hydrolytic cleavage of multi-L-arginyl-poly-L-aspartic acid (cyanophycin; a water-insoluble reserve polymer) into aspartate-arginine dipeptides. In Geminocystis herdmanii (strain PCC 6308) (Synechocystis sp. (strain PCC 6308)), this protein is Cyanophycinase (cphB).